The following is a 256-amino-acid chain: Acetyl-coenzyme A carboxylase carboxyl transferase subunit alpha (256 aa).

The region spanning M1 to E236 is the CoA carboxyltransferase C-terminal domain.

Belongs to the AccA family. Acetyl-CoA carboxylase is a heterohexamer composed of biotin carboxyl carrier protein (AccB), biotin carboxylase (AccC) and two subunits each of ACCase subunit alpha (AccA) and ACCase subunit beta (AccD).

It localises to the cytoplasm. The catalysed reaction is N(6)-carboxybiotinyl-L-lysyl-[protein] + acetyl-CoA = N(6)-biotinyl-L-lysyl-[protein] + malonyl-CoA. Its pathway is lipid metabolism; malonyl-CoA biosynthesis; malonyl-CoA from acetyl-CoA: step 1/1. Its function is as follows. Component of the acetyl coenzyme A carboxylase (ACC) complex. First, biotin carboxylase catalyzes the carboxylation of biotin on its carrier protein (BCCP) and then the CO(2) group is transferred by the carboxyltransferase to acetyl-CoA to form malonyl-CoA. The chain is Acetyl-coenzyme A carboxylase carboxyl transferase subunit alpha from Streptococcus thermophilus (strain CNRZ 1066).